Reading from the N-terminus, the 118-residue chain is Ribosome-binding factor A (118 aa).

This sequence belongs to the RbfA family. As to quaternary structure, monomer. Binds 30S ribosomal subunits, but not 50S ribosomal subunits or 70S ribosomes.

The protein resides in the cytoplasm. Its function is as follows. One of several proteins that assist in the late maturation steps of the functional core of the 30S ribosomal subunit. Associates with free 30S ribosomal subunits (but not with 30S subunits that are part of 70S ribosomes or polysomes). Required for efficient processing of 16S rRNA. May interact with the 5'-terminal helix region of 16S rRNA. This chain is Ribosome-binding factor A, found in Shouchella clausii (strain KSM-K16) (Alkalihalobacillus clausii).